Reading from the N-terminus, the 154-residue chain is Iron-sulfur cluster assembly 2 homolog, mitochondrial (154 aa).

The N-terminal 8 residues, 1–8 (MAAARGLS), are a transit peptide targeting the mitochondrion. The Fe cation site is built by cysteine 79, cysteine 144, and cysteine 146.

This sequence belongs to the HesB/IscA family. In terms of assembly, heterotetramer; forms a dimer of dimers with IBA57. Interacts with [2Fe-2S]-ISCA2 forming the heterodimer [2Fe- 2S]-ISCA2-IBA57 complex; [2Fe-2S] cluster binding is absolutely required to promote the complex formation.

It localises to the mitochondrion. Its function is as follows. Involved in the maturation of mitochondrial 4Fe-4S proteins functioning late in the iron-sulfur cluster assembly pathway. May be involved in the binding of an intermediate of Fe/S cluster assembly. This is Iron-sulfur cluster assembly 2 homolog, mitochondrial (ISCA2) from Pongo abelii (Sumatran orangutan).